We begin with the raw amino-acid sequence, 544 residues long: Chaperonin GroEL 1 (544 aa).

ATP contacts are provided by residues 29–32 (TLGP), 86–90 (DGTTT), Gly413, and Asp495.

The protein belongs to the chaperonin (HSP60) family. Forms a cylinder of 14 subunits composed of two heptameric rings stacked back-to-back. Interacts with the co-chaperonin GroES.

The protein localises to the cytoplasm. It carries out the reaction ATP + H2O + a folded polypeptide = ADP + phosphate + an unfolded polypeptide.. Its function is as follows. Together with its co-chaperonin GroES, plays an essential role in assisting protein folding. The GroEL-GroES system forms a nano-cage that allows encapsulation of the non-native substrate proteins and provides a physical environment optimized to promote and accelerate protein folding. The sequence is that of Chaperonin GroEL 1 from Synechococcus sp. (strain ATCC 27144 / PCC 6301 / SAUG 1402/1) (Anacystis nidulans).